The sequence spans 153 residues: Ribonuclease H (153 aa).

Residues 1-141 (MKHIEIYTDG…CDVLARDAAS (141 aa)) enclose the RNase H type-1 domain. Residues aspartate 9, glutamate 47, aspartate 69, and aspartate 133 each coordinate Mg(2+).

The protein belongs to the RNase H family. Monomer. Requires Mg(2+) as cofactor.

The protein resides in the cytoplasm. The catalysed reaction is Endonucleolytic cleavage to 5'-phosphomonoester.. Endonuclease that specifically degrades the RNA of RNA-DNA hybrids. The chain is Ribonuclease H from Pseudoalteromonas atlantica (strain T6c / ATCC BAA-1087).